The following is a 658-amino-acid chain: Transmembrane 9 superfamily member 11 (658 aa).

Residues 1–23 form the signal peptide; it reads MRSMDRFGIWVLAILLVIQSSFG. At 24-291 the chain is on the lumenal side; that stretch reads FYLPGSYPHK…LKMEGSKVHW (268 aa). The chain crosses the membrane as a helical span at residues 292–312; sequence FSILNSLMVITFLAGIVLVIF. Residues 313–364 lie on the Cytoplasmic side of the membrane; it reads LRTVRRDLTRYEELDKEAQAQMNEELSGWKLVVGDVFRAPSNASLLCVMVGD. Residues 365 to 385 traverse the membrane as a helical segment; the sequence is GVQILGMAVVTILFAALGFMS. The Lumenal portion of the chain corresponds to 386 to 391; it reads PASRGT. A helical transmembrane segment spans residues 392–412; the sequence is LITGMLFFYMILGIAAGYVSV. Topologically, residues 413–432 are cytoplasmic; the sequence is RLWRTIGCGEHRGWMSVAWK. Residues 433 to 453 form a helical membrane-spanning segment; the sequence is AACFFPGIAFLILTTLNFLLW. The Lumenal portion of the chain corresponds to 454–462; the sequence is GSHSTGAIP. The chain crosses the membrane as a helical span at residues 463-483; it reads FSLFVILLLLWFCISVPLTLI. Topologically, residues 484 to 515 are cytoplasmic; the sequence is GGYFGAKAPHIEFPVRTNQIPREIPAQKYPSW. Residues 516–536 traverse the membrane as a helical segment; that stretch reads LLVLGAGTLPFGTLFIELFFI. Residues 537–547 lie on the Lumenal side of the membrane; sequence MSSIWMGRVYY. The helical transmembrane segment at 548–568 threads the bilayer; it reads VFGFLFVVLILLVVVCAEVSL. Residues 569-586 are Cytoplasmic-facing; sequence VLTYMHLCVEDYKWWWKS. Residues 587-607 form a helical membrane-spanning segment; sequence FFASGSVAIYIFIYSINYLVF. Topologically, residues 608–619 are lumenal; that stretch reads DLKSLSGPVSAT. The helical transmembrane segment at 620–640 threads the bilayer; that stretch reads LYLGYSLFMVLAIMLATGTVG. At 641–658 the chain is on the cytoplasmic side; sequence FLSSFWFVHYLFSSVKLD. Residues 647-652 carry the Endoplasmic reticulum export signal motif; it reads FVHYLF. The Golgi retention signal motif lies at 656-658; it reads KLD.

The protein belongs to the nonaspanin (TM9SF) (TC 9.A.2) family.

It localises to the endosome membrane. The protein resides in the golgi apparatus membrane. This is Transmembrane 9 superfamily member 11 from Arabidopsis thaliana (Mouse-ear cress).